Here is a 607-residue protein sequence, read N- to C-terminus: Protein NRT1/ PTR FAMILY 1.2 (607 aa).

The next 10 membrane-spanning stretches (helical) occupy residues 65–85, 96–116, 138–158, 185–205, 215–235, 374–394, 418–438, 460–480, 496–516, and 544–564; these read TNVLFMWSAASNFTPLLGAFL, ISIASLSSFLGMVLLWLTAML, ASQLALLYSAFALISIGSGGI, FFGWYYASSAVAVLIAFTGIV, IGFGVPAVLMLIAALLFILAS, VPAGSFGMFTIIALALWVILY, MGLGLFMSFLAMAISAMVESF, AMWLVPQYVLHGLAEALTAIG, IAASLFGLGMAVASLLASVVL, and YYWVLAIMSFINVIYYVICSW. Ser-601 carries the phosphoserine modification.

The protein belongs to the major facilitator superfamily. Proton-dependent oligopeptide transporter (POT/PTR) (TC 2.A.17) family. As to expression, expressed in shoots, stems, leaves, flowers and siliques. Mainly detected in larger expanded leaves, in the companion cells of major veins.

The protein resides in the cell membrane. Its function is as follows. Low-affinity nitrate transporter involved in xylem-to-phloem transfer for redistributing nitrate into developing leaves. Not involved in dipeptides transport. The protein is Protein NRT1/ PTR FAMILY 1.2 (NPF1.2) of Arabidopsis thaliana (Mouse-ear cress).